The chain runs to 252 residues: Ribosomal RNA small subunit methyltransferase J (252 aa).

Residues 101–102 (RD), 117–118 (ER), 153–154 (SS), and D171 each bind S-adenosyl-L-methionine.

This sequence belongs to the methyltransferase superfamily. RsmJ family.

The protein resides in the cytoplasm. It carries out the reaction guanosine(1516) in 16S rRNA + S-adenosyl-L-methionine = N(2)-methylguanosine(1516) in 16S rRNA + S-adenosyl-L-homocysteine + H(+). Specifically methylates the guanosine in position 1516 of 16S rRNA. This Pseudoalteromonas translucida (strain TAC 125) protein is Ribosomal RNA small subunit methyltransferase J.